Reading from the N-terminus, the 236-residue chain is Ribonuclease 3 (236 aa).

One can recognise an RNase III domain in the interval 7–136; sequence KSYILKKFNI…FIGALYLDQG (130 aa). Glutamate 49 provides a ligand contact to Mg(2+). Aspartate 53 is a catalytic residue. Positions 122 and 125 each coordinate Mg(2+). Residue glutamate 125 is part of the active site. The region spanning 162–232 is the DRBM domain; the sequence is DFKSRLQERL…ARAALKILED (71 aa).

This sequence belongs to the ribonuclease III family. As to quaternary structure, homodimer. The cofactor is Mg(2+).

It localises to the cytoplasm. It catalyses the reaction Endonucleolytic cleavage to 5'-phosphomonoester.. In terms of biological role, digests double-stranded RNA. Involved in the processing of primary rRNA transcript to yield the immediate precursors to the large and small rRNAs (23S and 16S). Processes some mRNAs, and tRNAs when they are encoded in the rRNA operon. Processes pre-crRNA and tracrRNA of type II CRISPR loci if present in the organism. The protein is Ribonuclease 3 of Leuconostoc mesenteroides subsp. mesenteroides (strain ATCC 8293 / DSM 20343 / BCRC 11652 / CCM 1803 / JCM 6124 / NCDO 523 / NBRC 100496 / NCIMB 8023 / NCTC 12954 / NRRL B-1118 / 37Y).